The chain runs to 264 residues: tRNA pseudouridine synthase A (264 aa).

Catalysis depends on aspartate 51, which acts as the Nucleophile. Tyrosine 109 contacts substrate.

This sequence belongs to the tRNA pseudouridine synthase TruA family. Homodimer.

The catalysed reaction is uridine(38/39/40) in tRNA = pseudouridine(38/39/40) in tRNA. Its function is as follows. Formation of pseudouridine at positions 38, 39 and 40 in the anticodon stem and loop of transfer RNAs. The chain is tRNA pseudouridine synthase A from Aromatoleum aromaticum (strain DSM 19018 / LMG 30748 / EbN1) (Azoarcus sp. (strain EbN1)).